Reading from the N-terminus, the 160-residue chain is Endoribonuclease YbeY (160 aa).

H123, H127, and H133 together coordinate Zn(2+).

This sequence belongs to the endoribonuclease YbeY family. The cofactor is Zn(2+).

Its subcellular location is the cytoplasm. Single strand-specific metallo-endoribonuclease involved in late-stage 70S ribosome quality control and in maturation of the 3' terminus of the 16S rRNA. This chain is Endoribonuclease YbeY, found in Shouchella clausii (strain KSM-K16) (Alkalihalobacillus clausii).